The primary structure comprises 267 residues: uncharacterized protein (267 aa).

One copy of the WD repeat lies at 50 to 90 (PGLNAVTASKFSPDGRWLLNIADGSGYVQLWDTAKGERVKT).

This is an uncharacterized protein from Deinococcus radiodurans (strain ATCC 13939 / DSM 20539 / JCM 16871 / CCUG 27074 / LMG 4051 / NBRC 15346 / NCIMB 9279 / VKM B-1422 / R1).